Here is a 726-residue protein sequence, read N- to C-terminus: Transcription factor 12 (726 aa).

Disordered stretches follow at residues Ser-27 to Phe-75, Leu-89 to Asp-223, Tyr-243 to Asp-267, Ser-289 to Pro-309, Pro-345 to Ala-367, Thr-380 to Ser-409, Met-501 to Leu-532, Val-558 to Met-624, and Glu-694 to Leu-726. Residues Pro-29 to Ala-47 show a composition bias toward polar residues. Residues Ser-55–Gly-74 are compositionally biased toward low complexity. Polar residues-rich tracts occupy residues Pro-145–Gly-157, Gly-249–Leu-263, and Phe-291–Pro-309. Low complexity predominate over residues Thr-348–Pro-359. Composition is skewed to polar residues over residues Gly-389 to Ser-409 and Gly-510 to Leu-532. The segment covering Glu-559–Leu-575 has biased composition (basic and acidic residues). Residues Ser-592–Ser-603 are compositionally biased toward low complexity. Positions Pro-612–Met-624 are enriched in basic and acidic residues. A bHLH domain is found at Glu-621 to Leu-674. Residues Gln-676–Ser-699 form a class A specific domain region. Residues Thr-717–Leu-726 are compositionally biased toward polar residues.

As to quaternary structure, efficient DNA binding requires dimerization with another bHLH protein.

Its subcellular location is the nucleus. Transcriptional regulator. Involved in the initiation of neuronal differentiation. Activates transcription by binding to the E box (5'-CANNTG-3'). May be involved in the functional network that regulates the development of the GnRH axis. This Danio rerio (Zebrafish) protein is Transcription factor 12 (tcf12).